The chain runs to 142 residues: Glia maturation factor beta (142 aa).

Position 2 is an N-acetylserine (Ser2). The 136-residue stretch at 4–139 (SLVVCDVAED…TEEWLREKLG (136 aa)) folds into the ADF-H domain.

This sequence belongs to the actin-binding proteins ADF family. GMF subfamily. Phosphorylated; stimulated by phorbol ester.

In terms of biological role, this protein causes differentiation of brain cells, stimulation of neural regeneration, and inhibition of proliferation of tumor cells. This chain is Glia maturation factor beta (Gmfb), found in Mus musculus (Mouse).